Consider the following 353-residue polypeptide: Fe(3+) ions import ATP-binding protein FbpC (353 aa).

The region spanning 9–239 is the ABC transporter domain; sequence VVFENVRKTF…PASSFIADFM (231 aa). 41–48 provides a ligand contact to ATP; the sequence is GPSGCGKT.

This sequence belongs to the ABC transporter superfamily. Fe(3+) ion importer (TC 3.A.1.10) family. As to quaternary structure, the complex is composed of two ATP-binding proteins (FbpC), two transmembrane proteins (FbpB) and a solute-binding protein (FbpA).

It localises to the cell inner membrane. It catalyses the reaction Fe(3+)(out) + ATP + H2O = Fe(3+)(in) + ADP + phosphate + H(+). Functionally, part of the ABC transporter complex FbpABC involved in Fe(3+) ions import. Responsible for energy coupling to the transport system. In Agrobacterium fabrum (strain C58 / ATCC 33970) (Agrobacterium tumefaciens (strain C58)), this protein is Fe(3+) ions import ATP-binding protein FbpC.